Here is a 165-residue protein sequence, read N- to C-terminus: MNALLTPDYGLIFWTIVNFLLLVFLLGKFAWKPIIGALEARENKISQDKKDAQEARDEAQKIKAELDVRLSNISKEAQEKLAQVEALAKQQKDAMIKDAQASSERMIATAKEEIEAQKNQALKEVKKEIADMAVEAAAKIAGVKTDPKTDAALVDNIVKDIINKA.

Residues 11–31 (LIFWTIVNFLLLVFLLGKFAW) form a helical membrane-spanning segment.

Belongs to the ATPase B chain family. As to quaternary structure, F-type ATPases have 2 components, F(1) - the catalytic core - and F(0) - the membrane proton channel. F(1) has five subunits: alpha(3), beta(3), gamma(1), delta(1), epsilon(1). F(0) has three main subunits: a(1), b(2) and c(10-14). The alpha and beta chains form an alternating ring which encloses part of the gamma chain. F(1) is attached to F(0) by a central stalk formed by the gamma and epsilon chains, while a peripheral stalk is formed by the delta and b chains.

It localises to the cell membrane. F(1)F(0) ATP synthase produces ATP from ADP in the presence of a proton or sodium gradient. F-type ATPases consist of two structural domains, F(1) containing the extramembraneous catalytic core and F(0) containing the membrane proton channel, linked together by a central stalk and a peripheral stalk. During catalysis, ATP synthesis in the catalytic domain of F(1) is coupled via a rotary mechanism of the central stalk subunits to proton translocation. Functionally, component of the F(0) channel, it forms part of the peripheral stalk, linking F(1) to F(0). This Elusimicrobium minutum (strain Pei191) protein is ATP synthase subunit b.